A 292-amino-acid chain; its full sequence is 33 kDa chaperonin (292 aa).

2 disulfides stabilise this stretch: Cys230–Cys232 and Cys263–Cys266.

Belongs to the HSP33 family. Under oxidizing conditions two disulfide bonds are formed involving the reactive cysteines. Under reducing conditions zinc is bound to the reactive cysteines and the protein is inactive.

The protein resides in the cytoplasm. Functionally, redox regulated molecular chaperone. Protects both thermally unfolding and oxidatively damaged proteins from irreversible aggregation. Plays an important role in the bacterial defense system toward oxidative stress. In Salmonella typhi, this protein is 33 kDa chaperonin.